A 148-amino-acid chain; its full sequence is Large ribosomal subunit protein bL9 (148 aa).

Belongs to the bacterial ribosomal protein bL9 family.

In terms of biological role, binds to the 23S rRNA. This Pseudomonas fluorescens (strain SBW25) protein is Large ribosomal subunit protein bL9.